We begin with the raw amino-acid sequence, 540 residues long: MAGKQILFREDARRALERGVNALADAVKVTLGPKGRNVVLEKKFGSPQIINDGVSIAREIELADPVENMGAQLVKEVATKTNDVAGDGTTTATVLAQAIIREGLKNVTAGANPMILRKGIEKAVAKAVEEIKAIAKPVETSEAIAQVAAISANDEEIGKLIAEAMEKVGKDGVITVEESQGLGTTLEVVEGMSFDRGYISPYMITDPDKMEAILNDPYILITDKKISAIADLLPILEKVVQTGKPLLIIAEDVEGEALATLVVNKLRGTLTCVAVKAPGFGDRRKAMLEDIAILTNGQVVSEELGFKLENATLSMLGRAKQVRVKKEETIIVGGQGSPEAIEKRIAQIKKQIEETTSDFDREKLQERLAKLAGGVAVIQVGAATETEMKEKKLRIEDALNATRAAVEEGIVAGGGTTYIHIIKALEELEKTATGDERTGIAIVRKALEEPLKQIAINAGLEGSVIVEKVKTLPVGHGFNALTEEYVDMIAAGIVDPAKVTRSALQNAASVAAMLLTTEALVAEKPEKEKKGPDMPNMDMM.

ATP-binding positions include 30–33 (TLGP), 87–91 (DGTTT), G414, 479–481 (NAL), and D495.

It belongs to the chaperonin (HSP60) family. Forms a cylinder of 14 subunits composed of two heptameric rings stacked back-to-back. Interacts with the co-chaperonin GroES.

It localises to the cytoplasm. The enzyme catalyses ATP + H2O + a folded polypeptide = ADP + phosphate + an unfolded polypeptide.. Its function is as follows. Together with its co-chaperonin GroES, plays an essential role in assisting protein folding. The GroEL-GroES system forms a nano-cage that allows encapsulation of the non-native substrate proteins and provides a physical environment optimized to promote and accelerate protein folding. The polypeptide is Chaperonin GroEL (Carboxydothermus hydrogenoformans (strain ATCC BAA-161 / DSM 6008 / Z-2901)).